The chain runs to 495 residues: DDB1- and CUL4-associated factor 4 (495 aa).

Positions 1-17 (MNKSRWQSRRRHGRRSH) are enriched in basic residues. Positions 1-66 (MNKSRWQSRR…TAGTSSVPEL (66 aa)) are disordered. Basic and acidic residues predominate over residues 24–34 (RLRDSEDRSDS). Residues 51-62 (PSTSSGTAGTSS) show a composition bias toward low complexity. 2 WD repeats span residues 368-407 (FHDSAVTSVRILQDEQYLMASDMAGKIKLWDLRTTKCVRQ) and 410-451 (GHVN…LLRT).

Interacts with DDB1 and CUL4A.

The protein operates within protein modification; protein ubiquitination. Its function is as follows. May function as a substrate receptor for CUL4-DDB1 E3 ubiquitin-protein ligase complex. This Homo sapiens (Human) protein is DDB1- and CUL4-associated factor 4 (DCAF4).